Here is a 434-residue protein sequence, read N- to C-terminus: Glutamyl-tRNA reductase (434 aa).

Substrate-binding positions include 49 to 52, Ser-109, 114 to 116, and Gln-120; these read TCNR and EPQ. Cys-50 functions as the Nucleophile in the catalytic mechanism. An NADP(+)-binding site is contributed by 189-194; the sequence is GAGEMC.

It belongs to the glutamyl-tRNA reductase family. In terms of assembly, homodimer.

The catalysed reaction is (S)-4-amino-5-oxopentanoate + tRNA(Glu) + NADP(+) = L-glutamyl-tRNA(Glu) + NADPH + H(+). It functions in the pathway porphyrin-containing compound metabolism; protoporphyrin-IX biosynthesis; 5-aminolevulinate from L-glutamyl-tRNA(Glu): step 1/2. Catalyzes the NADPH-dependent reduction of glutamyl-tRNA(Glu) to glutamate 1-semialdehyde (GSA). The protein is Glutamyl-tRNA reductase of Geotalea daltonii (strain DSM 22248 / JCM 15807 / FRC-32) (Geobacter daltonii).